The primary structure comprises 126 residues: Small ribosomal subunit protein uS12 (126 aa).

D89 carries the 3-methylthioaspartic acid modification.

The protein belongs to the universal ribosomal protein uS12 family. Part of the 30S ribosomal subunit. Contacts proteins S8 and S17. May interact with IF1 in the 30S initiation complex.

Functionally, with S4 and S5 plays an important role in translational accuracy. In terms of biological role, interacts with and stabilizes bases of the 16S rRNA that are involved in tRNA selection in the A site and with the mRNA backbone. Located at the interface of the 30S and 50S subunits, it traverses the body of the 30S subunit contacting proteins on the other side and probably holding the rRNA structure together. The combined cluster of proteins S8, S12 and S17 appears to hold together the shoulder and platform of the 30S subunit. The chain is Small ribosomal subunit protein uS12 from Polynucleobacter necessarius subsp. necessarius (strain STIR1).